The following is a 1488-amino-acid chain: Chromosome partition protein MukB (1488 aa).

34–41 provides a ligand contact to ATP; sequence GGNGAGKS. 3 coiled-coil regions span residues 326–418, 444–472, and 509–602; these read LEAD…QYNQ, LDTF…QTAH, and RHLA…QRAP. The flexible hinge stretch occupies residues 666-783; that stretch reads PGGAEDQRLN…SLPIFGRAAR (118 aa). 3 coiled-coil regions span residues 835–923, 977–1116, and 1209–1265; these read EAEI…AKLE, EMLS…AKAG, and VEAI…LQSV. The interval 1049 to 1074 is disordered; that stretch reads ADSGAEERARQRRDELHAQLSNNRSR. Basic and acidic residues predominate over residues 1051 to 1065; sequence SGAEERARQRRDELH.

It belongs to the SMC family. MukB subfamily. Homodimerization via its hinge domain. Binds to DNA via its C-terminal region. Interacts, and probably forms a ternary complex, with MukE and MukF via its C-terminal region. The complex formation is stimulated by calcium or magnesium. Interacts with tubulin-related protein FtsZ.

It is found in the cytoplasm. Its subcellular location is the nucleoid. Functionally, plays a central role in chromosome condensation, segregation and cell cycle progression. Functions as a homodimer, which is essential for chromosome partition. Involved in negative DNA supercoiling in vivo, and by this means organize and compact chromosomes. May achieve or facilitate chromosome segregation by condensation DNA from both sides of a centrally located replisome during cell division. The sequence is that of Chromosome partition protein MukB from Salmonella schwarzengrund (strain CVM19633).